The sequence spans 238 residues: tRNA (guanine-N(7)-)-methyltransferase (238 aa).

4 residues coordinate S-adenosyl-L-methionine: E68, E93, D120, and D143. Residue D143 is part of the active site. Residues K147, D179, and 216–219 (TKFE) contribute to the substrate site.

This sequence belongs to the class I-like SAM-binding methyltransferase superfamily. TrmB family.

The enzyme catalyses guanosine(46) in tRNA + S-adenosyl-L-methionine = N(7)-methylguanosine(46) in tRNA + S-adenosyl-L-homocysteine. It functions in the pathway tRNA modification; N(7)-methylguanine-tRNA biosynthesis. Its function is as follows. Catalyzes the formation of N(7)-methylguanine at position 46 (m7G46) in tRNA. The protein is tRNA (guanine-N(7)-)-methyltransferase of Shewanella baltica (strain OS195).